Here is a 486-residue protein sequence, read N- to C-terminus: Adenosylhomocysteinase (486 aa).

Substrate contacts are provided by threonine 63, aspartate 147, and glutamate 209. An NAD(+)-binding site is contributed by threonine 210–threonine 212. The substrate site is built by lysine 239 and aspartate 243. NAD(+) is bound by residues asparagine 244, glycine 273–glycine 278, glutamate 296, asparagine 331, isoleucine 352–histidine 354, and asparagine 400.

The protein belongs to the adenosylhomocysteinase family. It depends on NAD(+) as a cofactor.

It catalyses the reaction S-adenosyl-L-homocysteine + H2O = L-homocysteine + adenosine. Its pathway is amino-acid biosynthesis; L-homocysteine biosynthesis; L-homocysteine from S-adenosyl-L-homocysteine: step 1/1. Its function is as follows. Adenosylhomocysteine is a competitive inhibitor of S-adenosyl-L-methionine-dependent methyl transferase reactions; therefore adenosylhomocysteinase may play a key role in the control of methylations via regulation of the intracellular concentration of adenosylhomocysteine. The polypeptide is Adenosylhomocysteinase (Trichomonas vaginalis).